A 459-amino-acid chain; its full sequence is tRNA modification GTPase MnmE (459 aa).

(6S)-5-formyl-5,6,7,8-tetrahydrofolate contacts are provided by Arg22, Glu85, and Arg124. The TrmE-type G domain occupies 221-380 (GLSTVIVGKP…LELQIRDLFF (160 aa)). Position 231 (Asn231) interacts with K(+). Residues 231–236 (NVGKSS), 250–256 (TEVAGTT), and 275–278 (DTAG) contribute to the GTP site. Ser235 lines the Mg(2+) pocket. Residues Thr250, Val252, and Thr255 each contribute to the K(+) site. A Mg(2+)-binding site is contributed by Thr256. Position 459 (Lys459) interacts with (6S)-5-formyl-5,6,7,8-tetrahydrofolate.

The protein belongs to the TRAFAC class TrmE-Era-EngA-EngB-Septin-like GTPase superfamily. TrmE GTPase family. Homodimer. Heterotetramer of two MnmE and two MnmG subunits. It depends on K(+) as a cofactor.

The protein resides in the cytoplasm. Its function is as follows. Exhibits a very high intrinsic GTPase hydrolysis rate. Involved in the addition of a carboxymethylaminomethyl (cmnm) group at the wobble position (U34) of certain tRNAs, forming tRNA-cmnm(5)s(2)U34. This is tRNA modification GTPase MnmE from Staphylococcus haemolyticus (strain JCSC1435).